The sequence spans 438 residues: Serine--tRNA ligase (438 aa).

235–237 contacts L-serine; that stretch reads TAE. ATP contacts are provided by residues 266–268 and valine 282; that span reads RKE. Glutamate 289 is a binding site for L-serine. Residue 355–358 coordinates ATP; that stretch reads ELVS. Threonine 393 contacts L-serine.

The protein belongs to the class-II aminoacyl-tRNA synthetase family. Type-1 seryl-tRNA synthetase subfamily. In terms of assembly, homodimer. The tRNA molecule binds across the dimer.

The enzyme catalyses tRNA(Ser) + L-serine + ATP = L-seryl-tRNA(Ser) + AMP + diphosphate + H(+). It carries out the reaction tRNA(Sec) + L-serine + ATP = L-seryl-tRNA(Sec) + AMP + diphosphate + H(+). It participates in aminoacyl-tRNA biosynthesis; selenocysteinyl-tRNA(Sec) biosynthesis; L-seryl-tRNA(Sec) from L-serine and tRNA(Sec): step 1/1. In terms of biological role, catalyzes the attachment of serine to tRNA(Ser). Is also able to aminoacylate tRNA(Sec) with serine, to form the misacylated tRNA L-seryl-tRNA(Sec), which will be further converted into selenocysteinyl-tRNA(Sec). The protein is Serine--tRNA ligase of Helianthus annuus (Common sunflower).